Here is a 261-residue protein sequence, read N- to C-terminus: Enolase-phosphatase E1 (261 aa).

Residues D16 and E18 each coordinate Mg(2+). Substrate contacts are provided by residues 153-154 (SS) and K187. Mg(2+) is bound at residue D212.

The protein belongs to the HAD-like hydrolase superfamily. MasA/MtnC family. In terms of assembly, monomer. It depends on Mg(2+) as a cofactor.

The protein localises to the cytoplasm. It is found in the nucleus. The catalysed reaction is 5-methylsulfanyl-2,3-dioxopentyl phosphate + H2O = 1,2-dihydroxy-5-(methylsulfanyl)pent-1-en-3-one + phosphate. It participates in amino-acid biosynthesis; L-methionine biosynthesis via salvage pathway; L-methionine from S-methyl-5-thio-alpha-D-ribose 1-phosphate: step 3/6. Its pathway is amino-acid biosynthesis; L-methionine biosynthesis via salvage pathway; L-methionine from S-methyl-5-thio-alpha-D-ribose 1-phosphate: step 4/6. Functionally, bifunctional enzyme that catalyzes the enolization of 2,3-diketo-5-methylthiopentyl-1-phosphate (DK-MTP-1-P) into the intermediate 2-hydroxy-3-keto-5-methylthiopentenyl-1-phosphate (HK-MTPenyl-1-P), which is then dephosphorylated to form the acireductone 1,2-dihydroxy-3-keto-5-methylthiopentene (DHK-MTPene). The sequence is that of Enolase-phosphatase E1 (enoph1) from Salmo salar (Atlantic salmon).